The chain runs to 394 residues: Elongation factor Tu 1 (394 aa).

Positions 10–204 constitute a tr-type G domain; that stretch reads KPHVNVGTIG…ALDSYIPEPE (195 aa). The segment at 19 to 26 is G1; the sequence is GHVDHGKT. A GTP-binding site is contributed by 19–26; that stretch reads GHVDHGKT. Thr26 serves as a coordination point for Mg(2+). Residues 60-64 form a G2 region; the sequence is GITIS. Residues 81 to 84 form a G3 region; that stretch reads DCPG. GTP contacts are provided by residues 81–85 and 136–139; these read DCPGH and NKCD. The segment at 136-139 is G4; it reads NKCD. The segment at 174 to 176 is G5; that stretch reads SAL.

It belongs to the TRAFAC class translation factor GTPase superfamily. Classic translation factor GTPase family. EF-Tu/EF-1A subfamily. Monomer.

The protein localises to the cytoplasm. The catalysed reaction is GTP + H2O = GDP + phosphate + H(+). GTP hydrolase that promotes the GTP-dependent binding of aminoacyl-tRNA to the A-site of ribosomes during protein biosynthesis. The chain is Elongation factor Tu 1 from Vibrio vulnificus (strain YJ016).